The primary structure comprises 100 residues: uncharacterized protein (100 aa).

The protein to M.jannaschii MJ1155.1.

This is an uncharacterized protein from Archaeoglobus fulgidus (strain ATCC 49558 / DSM 4304 / JCM 9628 / NBRC 100126 / VC-16).